A 436-amino-acid chain; its full sequence is UDP-N-acetylmuramate--L-alanine ligase (436 aa).

108 to 114 contributes to the ATP binding site; that stretch reads GAHGKTS.

It belongs to the MurCDEF family.

The protein resides in the cytoplasm. The catalysed reaction is UDP-N-acetyl-alpha-D-muramate + L-alanine + ATP = UDP-N-acetyl-alpha-D-muramoyl-L-alanine + ADP + phosphate + H(+). It functions in the pathway cell wall biogenesis; peptidoglycan biosynthesis. Functionally, cell wall formation. This is UDP-N-acetylmuramate--L-alanine ligase from Bacillus cereus (strain B4264).